The following is a 481-amino-acid chain: Glutamate--tRNA ligase (481 aa).

The short motif at 28 to 38 (PSPTGFLHLGG) is the 'HIGH' region element. A compositionally biased stretch (basic and acidic residues) spans 139 to 148 (RYDGTWRPEP). Residues 139–159 (RYDGTWRPEPGKTLPPVPADR) are disordered. The 'KMSKS' region motif lies at 260 to 264 (KLSKR). Lys-263 is an ATP binding site.

It belongs to the class-I aminoacyl-tRNA synthetase family. Glutamate--tRNA ligase type 1 subfamily. As to quaternary structure, monomer.

It localises to the cytoplasm. It carries out the reaction tRNA(Glu) + L-glutamate + ATP = L-glutamyl-tRNA(Glu) + AMP + diphosphate. Functionally, catalyzes the attachment of glutamate to tRNA(Glu) in a two-step reaction: glutamate is first activated by ATP to form Glu-AMP and then transferred to the acceptor end of tRNA(Glu). The polypeptide is Glutamate--tRNA ligase (Bordetella parapertussis (strain 12822 / ATCC BAA-587 / NCTC 13253)).